Consider the following 391-residue polypeptide: 3-ketoacyl-CoA thiolase (391 aa).

The active-site Acyl-thioester intermediate is the Cys95. Catalysis depends on proton acceptor residues His347 and Cys377.

Belongs to the thiolase-like superfamily. Thiolase family. As to quaternary structure, heterotetramer of two alpha chains (FadB) and two beta chains (FadA).

It localises to the cytoplasm. The enzyme catalyses an acyl-CoA + acetyl-CoA = a 3-oxoacyl-CoA + CoA. Its pathway is lipid metabolism; fatty acid beta-oxidation. Catalyzes the final step of fatty acid oxidation in which acetyl-CoA is released and the CoA ester of a fatty acid two carbons shorter is formed. The protein is 3-ketoacyl-CoA thiolase of Alcanivorax borkumensis (strain ATCC 700651 / DSM 11573 / NCIMB 13689 / SK2).